A 268-amino-acid chain; its full sequence is Tryptophan synthase alpha chain (268 aa).

Residues Glu49 and Asp60 each act as proton acceptor in the active site.

This sequence belongs to the TrpA family. In terms of assembly, tetramer of two alpha and two beta chains.

It carries out the reaction (1S,2R)-1-C-(indol-3-yl)glycerol 3-phosphate + L-serine = D-glyceraldehyde 3-phosphate + L-tryptophan + H2O. The protein operates within amino-acid biosynthesis; L-tryptophan biosynthesis; L-tryptophan from chorismate: step 5/5. Its function is as follows. The alpha subunit is responsible for the aldol cleavage of indoleglycerol phosphate to indole and glyceraldehyde 3-phosphate. In Edwardsiella ictaluri (strain 93-146), this protein is Tryptophan synthase alpha chain.